The chain runs to 262 residues: MRALAIAATGMDAQQTNLEVIANNIANINTTGYKRARAEFTDLLYQTERMQGVPNRANQAIVPEGANIGLGVQTSAVRNIHTQGNLIETGNKLDVAIIGQGWFQIEAADGSTLYSRAGAFNKNADGNLVTVDGYNVIPNINIPTDAQDITITRTGQVTARIGNAADFTQLGQLTIANFANEAGLKPLGDNLFSQTPASGAPVVGVPDDPSYGYVKQSYLEGSNVDAVKEITDLITAQRAYEMNSKVITTADEMASIVSKNLK.

The protein belongs to the flagella basal body rod proteins family. As to quaternary structure, the basal body constitutes a major portion of the flagellar organelle and consists of four rings (L,P,S, and M) mounted on a central rod. The rod consists of about 26 subunits of FlgG in the distal portion, and FlgB, FlgC and FlgF are thought to build up the proximal portion of the rod with about 6 subunits each.

It is found in the bacterial flagellum basal body. This Agrobacterium fabrum (strain C58 / ATCC 33970) (Agrobacterium tumefaciens (strain C58)) protein is Flagellar basal-body rod protein FlgG (flgG).